The primary structure comprises 429 residues: MKKLNTQSPDFQAGLKALLAFETAQNPETERIVADICADVQKRGDAALIEYTNKFDQTNAKSIDDLILTQADLKAAFERIPNDVQTALQTAARRVESYHQRQKMESWSYTDEDGTLLGQQITPLDRVGIYVPGGKAAYPSSVIMNAMPAHVAGVKEIIMVVPTPKGERNDIVLAAAYVAGVTKVFTVGGAQAVAALAYGTETIPQVDKITGPGNAFVAAAKRRVFGVVGIDMVAGPSEILVIADGTTPADWVAMDLFSQAEHDEIAQAILIGTSQAYLDEVEAAMDRLIETMPRRDIIEASLGNRGAMILAKDLDEACEIANYISPEHLELSVENPQEWAKKIRHAGAIFMGRYTGESLGDYCAGPNHVLPTSRTARFSSPLGTYDFQKRSSLIQVSEQGAQKLGETASVLAHGESLTAHARAAEFRMK.

Positions 130, 191, and 214 each coordinate NAD(+). Residues S237, Q259, and H262 each coordinate substrate. Q259 and H262 together coordinate Zn(2+). Residues E327 and H328 each act as proton acceptor in the active site. Residues H328, D361, E415, and H420 each contribute to the substrate site. D361 is a Zn(2+) binding site. H420 is a Zn(2+) binding site.

It belongs to the histidinol dehydrogenase family. Requires Zn(2+) as cofactor.

It catalyses the reaction L-histidinol + 2 NAD(+) + H2O = L-histidine + 2 NADH + 3 H(+). The protein operates within amino-acid biosynthesis; L-histidine biosynthesis; L-histidine from 5-phospho-alpha-D-ribose 1-diphosphate: step 9/9. Functionally, catalyzes the sequential NAD-dependent oxidations of L-histidinol to L-histidinaldehyde and then to L-histidine. The protein is Histidinol dehydrogenase of Neisseria meningitidis serogroup A / serotype 4A (strain DSM 15465 / Z2491).